The sequence spans 577 residues: Leucine-rich repeat protein soc-2 homolog (577 aa).

Basic and acidic residues-rich tracts occupy residues 1–10 and 33–48; these read MRRTKGRTDS and STAHKSDKKHDPEAKK. Positions 1–71 are disordered; it reads MRRTKGRTDS…PTVKKRSTPS (71 aa). LRR repeat units lie at residues 87-109, 110-131, 133-155, 156-177, 179-201, 202-223, 225-246, 248-269, 271-292, 294-315, 318-339, 342-363, 366-387, 389-410, 412-434, 435-456, 458-479, 481-502, 504-526, and 528-549; these read GATRLDLSKAAVTVLPKELKELT, SLRELYLYGNRIAVLPPEVGLL, NLETLALSENNLTTLPDNLVKLT, KLKVLDLRHNKIKEIPDVIYKL, TLTTLYLRFNRISVVESGIGNLK, LLERLSLRENKIKILPRVIGQL, HLVTLDISHNHIENLPAEIGNC, HMTSLDLQHNDIPSLPDSIGRL, AMTRLGLRYNQLSSLPDSLANC, GIDEFNIEGNNIAELPEKLLSS, NLTSLTLSRNKFEVFPAGPPKQ, QVNTFIMEHNRMQKIPFGVFNK, YLSKLNVKDNQLTSLPLDFGSW, SLVELNVATNQISKLPEDIQWL, NLEVLILSNNLLKKLPRGIGALR, KLRVLDIEENKLESIPTEIEYL, SLERLVLQSNCLGSLPRSIGYL, SVTYLSVGENELVSVPQEIGNM, SLEQLYLNDNENLQSLPYELVLC, and SLQIMSIENCPLSALPSQIVAG.

Belongs to the SHOC2 family.

Acts as a Ras effector and participates in MAPK pathway activation. Probably acts as a scaffolding protein in a protein phosphatase complex that specifically dephosphorylates Raf kinase and stimulate Raf activity at specialized signaling complexes upon Ras activation. The sequence is that of Leucine-rich repeat protein soc-2 homolog from Nematostella vectensis (Starlet sea anemone).